A 180-amino-acid chain; its full sequence is UPF0149 protein XAC3406 (180 aa).

The protein belongs to the UPF0149 family.

This chain is UPF0149 protein XAC3406, found in Xanthomonas axonopodis pv. citri (strain 306).